A 267-amino-acid polypeptide reads, in one-letter code: Putative carbamate hydrolase RutD (267 aa).

The region spanning 14–115 is the AB hydrolase-1 domain; sequence PTLVLSAGLG…EKLVVVNGWP (102 aa).

The protein belongs to the AB hydrolase superfamily. Hydrolase RutD family.

The enzyme catalyses carbamate + 2 H(+) = NH4(+) + CO2. In terms of biological role, involved in pyrimidine catabolism. May facilitate the hydrolysis of carbamate, a reaction that can also occur spontaneously. This is Putative carbamate hydrolase RutD from Serratia proteamaculans (strain 568).